A 715-amino-acid chain; its full sequence is uncharacterized protein (715 aa).

This is an uncharacterized protein from Mycobacterium tuberculosis (strain CDC 1551 / Oshkosh).